We begin with the raw amino-acid sequence, 245 residues long: MQTNRFEHPLNEKVRIYLRLEYLIRQMTHASQLSDQWQHQIFFRALFDLLEILDQVQLKTELAKDLEKQRCKLKNWLNIDGVDQNALLELLDSMDMAHHKLIAANRLGQDLRDDRFLSGIKQRFSIPGGSCCFDLPTLHHWLHLPLAHKQNDLSTWLSQLTEMTDALNLWLRFTRESGPFQPQIARAGFFQHTAEDASLLRLQICPSYGVYPMISGHRGRFAIRFIPFEEGATIADTIEFKLAIC.

Belongs to the ZapD family. As to quaternary structure, interacts with FtsZ.

The protein localises to the cytoplasm. Cell division factor that enhances FtsZ-ring assembly. Directly interacts with FtsZ and promotes bundling of FtsZ protofilaments, with a reduction in FtsZ GTPase activity. The sequence is that of Cell division protein ZapD from Photobacterium profundum (strain SS9).